We begin with the raw amino-acid sequence, 176 residues long: Large ribosomal subunit protein uL10 (176 aa).

The protein belongs to the universal ribosomal protein uL10 family. In terms of assembly, part of the ribosomal stalk of the 50S ribosomal subunit. The N-terminus interacts with L11 and the large rRNA to form the base of the stalk. The C-terminus forms an elongated spine to which L12 dimers bind in a sequential fashion forming a multimeric L10(L12)X complex.

In terms of biological role, forms part of the ribosomal stalk, playing a central role in the interaction of the ribosome with GTP-bound translation factors. This Alcanivorax borkumensis (strain ATCC 700651 / DSM 11573 / NCIMB 13689 / SK2) protein is Large ribosomal subunit protein uL10.